We begin with the raw amino-acid sequence, 797 residues long: GDH/6PGL endoplasmic bifunctional protein (797 aa).

An N-terminal signal peptide occupies residues 1-24 (MKCPGVWGMLTVTMCVVFLGCPQA). Position 25 is a pyrrolidone carboxylic acid (Gln-25). Residues 25–531 (QELQGHVSVI…SGSHLSFSLG (507 aa)) are hexose-6-phosphate dehydrogenase. Residues 37–44 (GATGDLAK) and Tyr-154 each bind NADP(+). Asn-162 carries an N-linked (GlcNAc...) asparagine glycan. Lys-179 lines the NADP(+) pocket. D-glucose 6-phosphate contacts are provided by residues Lys-179, 209 to 213 (HYLGK), Glu-248, and Asp-267. Lys-213 is modified (N6-succinyllysine). His-272 functions as the Proton acceptor in the catalytic mechanism. The N-linked (GlcNAc...) asparagine glycan is linked to Asn-287. The D-glucose 6-phosphate site is built by Lys-365 and Arg-370. Residue Arg-375 coordinates NADP(+). Residues 532–545 (QPEQLVPGPGSTPR) are linker. The 6-phosphogluconolactonase stretch occupies residues 546–797 (PSDFQVLGAK…WYMDYEAFLG (252 aa)). Residue Trp-623 participates in NADP(+) binding. Asn-689 carries N-linked (GlcNAc...) asparagine glycosylation.

The protein in the N-terminal section; belongs to the glucose-6-phosphate dehydrogenase family. In the C-terminal section; belongs to the glucosamine/galactosamine-6-phosphate isomerase family. 6-phosphogluconolactonase subfamily. As to quaternary structure, homodimer.

Its subcellular location is the endoplasmic reticulum lumen. It carries out the reaction D-glucose 6-phosphate + NAD(+) = 6-phospho-D-glucono-1,5-lactone + NADH + H(+). The catalysed reaction is D-glucose 6-phosphate + NADP(+) = 6-phospho-D-glucono-1,5-lactone + NADPH + H(+). The enzyme catalyses 6-phospho-D-glucono-1,5-lactone + H2O = 6-phospho-D-gluconate + H(+). It catalyses the reaction 2-deoxy-D-glucose 6-phosphate + NAD(+) = 2-deoxy-6-phospho-D-glucono-1,5-lactone + NADH + H(+). It carries out the reaction 2-deoxy-D-glucose 6-phosphate + NADP(+) = 2-deoxy-6-phospho-D-glucono-1,5-lactone + NADPH + H(+). The catalysed reaction is D-galactose 6-phosphate + NADP(+) = 6-phospho-D-galactono-1,5-lactone + NADPH + H(+). The enzyme catalyses D-galactose 6-phosphate + NAD(+) = 6-phospho-D-galactono-1,5-lactone + NADH + H(+). It catalyses the reaction D-glucosamine 6-phosphate + NADP(+) = 2-amino-2-deoxy-6-phospho-D-glucono-1,5-lactone + NADPH + 2 H(+). It carries out the reaction D-glucose + NAD(+) = D-glucono-1,5-lactone + NADH + H(+). The catalysed reaction is D-glucose + NADP(+) = D-glucono-1,5-lactone + NADPH + H(+). The enzyme catalyses D-glucose 6-sulfate + NADP(+) = 6-sulfo-D-glucono-1,5-lactone + NADPH + H(+). The protein operates within carbohydrate degradation; pentose phosphate pathway; D-ribulose 5-phosphate from D-glucose 6-phosphate (oxidative stage). It participates in carbohydrate degradation; pentose phosphate pathway; D-ribulose 5-phosphate from D-glucose 6-phosphate (oxidative stage): step 2/3. Functionally, bifunctional enzyme localized in the lumen of the endoplasmic reticulum that catalyzes the first two steps of the oxidative branch of the pentose phosphate pathway/shunt, an alternative to glycolysis and a major source of reducing power and metabolic intermediates for biosynthetic processes. Has a hexose-6-phosphate dehydrogenase activity, with broad substrate specificity compared to glucose-6-phosphate 1-dehydrogenase/G6PD, and catalyzes the first step of the pentose phosphate pathway. In addition, acts as a 6-phosphogluconolactonase and catalyzes the second step of the pentose phosphate pathway. May have a dehydrogenase activity for alternative substrates including glucosamine 6-phosphate and glucose 6-sulfate. The main function of this enzyme is to provide reducing equivalents such as NADPH to maintain the adequate levels of reductive cofactors in the oxidizing environment of the endoplasmic reticulum. By producing NADPH that is needed by reductases of the lumen of the endoplasmic reticulum like corticosteroid 11-beta-dehydrogenase isozyme 1/HSD11B1, indirectly regulates their activity. The chain is GDH/6PGL endoplasmic bifunctional protein from Oryctolagus cuniculus (Rabbit).